A 636-amino-acid chain; its full sequence is Molybdenum cofactor biosynthesis protein 1 (636 aa).

The tract at residues 1-383 is molybdenum cofactor biosynthesis protein A; it reads MAARPAFGIV…QMKNRPMILI (383 aa). A disordered region spans residues 19–40; sequence RGCSSGAPVTQPRPGEPSRPTR. Serine 64 is subject to Phosphoserine. The 216-residue stretch at 64–279 folds into the Radical SAM core domain; the sequence is SFGRQHSYLR…TIRQRWPGLE (216 aa). Arginine 73 provides a ligand contact to GTP. The [4Fe-4S] cluster site is built by cysteine 80 and cysteine 84. Tyrosine 86 contributes to the S-adenosyl-L-methionine binding site. Cysteine 87 contributes to the [4Fe-4S] cluster binding site. GTP is bound at residue arginine 123. Residue glycine 127 participates in S-adenosyl-L-methionine binding. Residue threonine 154 coordinates GTP. An S-adenosyl-L-methionine-binding site is contributed by serine 178. Lysine 198 carries the N6-acetyllysine modification. Position 215 (lysine 215) interacts with GTP. Methionine 249 serves as a coordination point for S-adenosyl-L-methionine. Cysteine 312 and cysteine 315 together coordinate [4Fe-4S] cluster. 317 to 319 is a binding site for GTP; that stretch reads RLR. Residue cysteine 329 participates in [4Fe-4S] cluster binding. Residues 414–636 form a molybdenum cofactor biosynthesis protein C region; it reads QCLSDQMASL…GGQRGDFHRA (223 aa). The disordered stretch occupies residues 444 to 484; the sequence is SPQRHYSSYPDPDTHSKCLSTGSQAPDAPSGPGPTSNQLTH. Position 528 is an N6-acetyllysine (lysine 528). Catalysis depends on aspartate 606, which acts as the For molybdenum cofactor biosynthesis protein C activity.

In the C-terminal section; belongs to the MoaC family. It in the N-terminal section; belongs to the radical SAM superfamily. MoaA family. In terms of assembly, isoform Mocs1a and isoform Mocs1b probably form a heterooligomer. The cofactor is [4Fe-4S] cluster.

It catalyses the reaction GTP + AH2 + S-adenosyl-L-methionine = (8S)-3',8-cyclo-7,8-dihydroguanosine 5'-triphosphate + 5'-deoxyadenosine + L-methionine + A + H(+). The enzyme catalyses (8S)-3',8-cyclo-7,8-dihydroguanosine 5'-triphosphate = cyclic pyranopterin phosphate + diphosphate. The protein operates within cofactor biosynthesis; molybdopterin biosynthesis. Functionally, isoform Mocs1a and isoform Mocs1b probably form a complex that catalyzes the conversion of 5'-GTP to cyclic pyranopterin monophosphate (cPMP). Mocs1a catalyzes the cyclization of GTP to (8S)-3',8-cyclo-7,8-dihydroguanosine 5'-triphosphate and Mocs1b catalyzes the subsequent conversion of (8S)-3',8-cyclo-7,8-dihydroguanosine 5'-triphosphate to cPMP. The polypeptide is Molybdenum cofactor biosynthesis protein 1 (Mocs1) (Mus musculus (Mouse)).